Consider the following 428-residue polypeptide: Chaperone SurA (428 aa).

Positions 1–20 are cleaved as a signal peptide; it reads MKNWKTLLLGIAMIANTSFA. PpiC domains lie at 171-272 and 282-382; these read STEL…KVND and VTEV…ELLD.

The protein resides in the periplasm. It catalyses the reaction [protein]-peptidylproline (omega=180) = [protein]-peptidylproline (omega=0). Chaperone involved in the correct folding and assembly of outer membrane proteins. Recognizes specific patterns of aromatic residues and the orientation of their side chains, which are found more frequently in integral outer membrane proteins. May act in both early periplasmic and late outer membrane-associated steps of protein maturation. This is Chaperone SurA from Escherichia coli O157:H7.